The following is a 152-amino-acid chain: D-aminoacyl-tRNA deacylase (152 aa).

The Gly-cisPro motif, important for rejection of L-amino acids signature appears at 142–143 (GP).

It belongs to the DTD family. In terms of assembly, homodimer.

The protein localises to the cytoplasm. It catalyses the reaction glycyl-tRNA(Ala) + H2O = tRNA(Ala) + glycine + H(+). It carries out the reaction a D-aminoacyl-tRNA + H2O = a tRNA + a D-alpha-amino acid + H(+). Functionally, an aminoacyl-tRNA editing enzyme that deacylates mischarged D-aminoacyl-tRNAs. Also deacylates mischarged glycyl-tRNA(Ala), protecting cells against glycine mischarging by AlaRS. Acts via tRNA-based rather than protein-based catalysis; rejects L-amino acids rather than detecting D-amino acids in the active site. By recycling D-aminoacyl-tRNA to D-amino acids and free tRNA molecules, this enzyme counteracts the toxicity associated with the formation of D-aminoacyl-tRNA entities in vivo and helps enforce protein L-homochirality. This Burkholderia cenocepacia (strain ATCC BAA-245 / DSM 16553 / LMG 16656 / NCTC 13227 / J2315 / CF5610) (Burkholderia cepacia (strain J2315)) protein is D-aminoacyl-tRNA deacylase.